Consider the following 754-residue polypeptide: Endoribonuclease Dicer-like (754 aa).

Residues 132 to 251 (QLMCDAKRLS…LPPELCLLLP (120 aa)) form the PAZ domain. RNase III domains are found at residues 298 to 418 (FAIT…TGPN) and 613 to 734 (AQTV…LACG). 6 residues coordinate Mn(2+): Glu336, Asp404, Glu407, Glu649, Asp720, and Glu723.

As to quaternary structure, homodimer. Mg(2+) serves as cofactor. Requires Mn(2+) as cofactor.

Involved in cleaving double-stranded RNA in the RNA interference (RNAi) pathway. It produces 21 to 23 bp dsRNAs (siRNAs) which target the selective destruction of homologous RNAs. This Giardia intestinalis (strain ATCC 50803 / WB clone C6) (Giardia lamblia) protein is Endoribonuclease Dicer-like.